Reading from the N-terminus, the 258-residue chain is Imidazole glycerol phosphate synthase subunit HisF (258 aa).

Active-site residues include Asp-12 and Asp-131.

This sequence belongs to the HisA/HisF family. As to quaternary structure, heterodimer of HisH and HisF.

Its subcellular location is the cytoplasm. The catalysed reaction is 5-[(5-phospho-1-deoxy-D-ribulos-1-ylimino)methylamino]-1-(5-phospho-beta-D-ribosyl)imidazole-4-carboxamide + L-glutamine = D-erythro-1-(imidazol-4-yl)glycerol 3-phosphate + 5-amino-1-(5-phospho-beta-D-ribosyl)imidazole-4-carboxamide + L-glutamate + H(+). It participates in amino-acid biosynthesis; L-histidine biosynthesis; L-histidine from 5-phospho-alpha-D-ribose 1-diphosphate: step 5/9. In terms of biological role, IGPS catalyzes the conversion of PRFAR and glutamine to IGP, AICAR and glutamate. The HisF subunit catalyzes the cyclization activity that produces IGP and AICAR from PRFAR using the ammonia provided by the HisH subunit. The polypeptide is Imidazole glycerol phosphate synthase subunit HisF (Nitrosomonas eutropha (strain DSM 101675 / C91 / Nm57)).